Here is a 652-residue protein sequence, read N- to C-terminus: Na(+)/H(+) antiporter NhaA 1 (652 aa).

Positions 1 to 427 (MTGELPRGRR…VGASLTTWLV (427 aa)) are na(+)/H(+) antiporter NhaA. A run of 11 helical transmembrane segments spans residues 27–47 (AFLHTETGSARVLLAAAVVAL), 78–98 (LRYWVNSGLMTFFFLVIGLEV), 114–134 (TLPLLAGIGGILVPIAIYLAF), 142–162 (VGWGVVMATDTALALGMLAVL), 173–193 (FLLTVAVVDDLIVIAVLAIAY), 200–220 (TALFVAAGIFALVLLIRAAGG), 227–247 (LLLGVAAWLAVSESGVDPVVV), 312–332 (LIVPLFALANVGVVVDGELLA), 343–363 (VLFAYVVGKPAGIVIASMLVA), 376–396 (WAAIIGVGTVSGIGFTIALLI), and 411–431 (IGILVATVGASLTTWLVFRLA). The Thioredoxin domain maps to 428-623 (FRLAARLPPA…LSAAVTSAFA (196 aa)). The tract at residues 626 to 652 (RLRPRDDREPDRRREVGSEQPDEEPGT) is disordered. Residues 628-642 (RPRDDREPDRRREVG) are compositionally biased toward basic and acidic residues.

In the N-terminal section; belongs to the NhaA Na(+)/H(+) (TC 2.A.33) antiporter family.

The protein localises to the cell membrane. It carries out the reaction Na(+)(in) + 2 H(+)(out) = Na(+)(out) + 2 H(+)(in). Functionally, na(+)/H(+) antiporter that extrudes sodium in exchange for external protons. This is Na(+)/H(+) antiporter NhaA 1 from Salinispora arenicola (strain CNS-205).